The sequence spans 176 residues: Translation initiation factor IF-3 (176 aa).

The protein belongs to the IF-3 family. Monomer.

The protein localises to the cytoplasm. Its function is as follows. IF-3 binds to the 30S ribosomal subunit and shifts the equilibrium between 70S ribosomes and their 50S and 30S subunits in favor of the free subunits, thus enhancing the availability of 30S subunits on which protein synthesis initiation begins. This is Translation initiation factor IF-3 from Wolinella succinogenes (strain ATCC 29543 / DSM 1740 / CCUG 13145 / JCM 31913 / LMG 7466 / NCTC 11488 / FDC 602W) (Vibrio succinogenes).